A 480-amino-acid chain; its full sequence is Aromatic-L-amino-acid decarboxylase (480 aa).

Lys-292 carries the post-translational modification N6-(pyridoxal phosphate)lysine.

Belongs to the group II decarboxylase family. The cofactor is pyridoxal 5'-phosphate.

The catalysed reaction is L-tryptophan + H(+) = tryptamine + CO2. It catalyses the reaction L-phenylalanine + H(+) = 2-phenylethylamine + CO2. It carries out the reaction 5-hydroxy-L-tryptophan + H(+) = serotonin + CO2. The enzyme catalyses L-dopa + H(+) = dopamine + CO2. In terms of biological role, involved in bacillamide C biosynthesis. Catalyzes the decarboxylation of L-tryptophan to tryptamine. The tryptamine obtained is then probably incorporated into the bacillamide C peptide, which is derived from the amino acids alanine, cysteine and tryptophan through nonribosomal peptide synthetase (NRPS) biosynthesis strategy. L-tryptophan is the best substrate, but the enzyme displays broad substrate specificity for various aromatic amino acids in vitro and it can also catalyze the decarboxylation of L-phenylalanine, 5-hydroxy-L-tryptophan (L-HTP) and L-DOPA, with lower efficiency. Exhibits weak activity with L-tyrosine. The polypeptide is Aromatic-L-amino-acid decarboxylase (Bacillus atrophaeus).